The primary structure comprises 242 residues: Transcriptional regulatory protein GltR (242 aa).

The Response regulatory domain maps to 7-123 (SILLVDDDQE…ELLARIKALL (117 aa)). Position 56 is a 4-aspartylphosphate (Asp-56). Residues 134-234 (GDVLAFEDWR…VRGSGYLLAA (101 aa)) constitute a DNA-binding region (ompR/PhoB-type).

Post-translationally, phosphorylated by GtrS.

The protein localises to the cytoplasm. Phosphorylation of GltR induces its dissociation from DNA leading to transcriptional activation. Its function is as follows. Member of the two-component regulatory system GtrS/GltR involved in the regulation of glucose metabolism and transport, as well as regulation of the exotoxin A gene expression. GltR controls the transcription of genes involved in glucose metabolism (glk and edd/gap-1) and transport (oprB) as well as the expression of toxA that encodes exotoxin A, the primary virulence factor. Acts as a repressor that is released from its target operators upon phosphorylation. In terms of biological role, contributes to modulation of the type III secretion system (T3SS) in response to host cells via the regulation of the OprB transport system. In Pseudomonas aeruginosa (strain ATCC 15692 / DSM 22644 / CIP 104116 / JCM 14847 / LMG 12228 / 1C / PRS 101 / PAO1), this protein is Transcriptional regulatory protein GltR.